A 463-amino-acid polypeptide reads, in one-letter code: L-seryl-tRNA(Sec) selenium transferase (463 aa).

K295 carries the N6-(pyridoxal phosphate)lysine modification.

Belongs to the SelA family. In terms of assembly, homodecamer; pentamer of dimers. Binds only one seryl-tRNA(Sec) per dimer. Pyridoxal 5'-phosphate is required as a cofactor.

Its subcellular location is the cytoplasm. It catalyses the reaction L-seryl-tRNA(Sec) + selenophosphate + H(+) = L-selenocysteinyl-tRNA(Sec) + phosphate. It functions in the pathway aminoacyl-tRNA biosynthesis; selenocysteinyl-tRNA(Sec) biosynthesis; selenocysteinyl-tRNA(Sec) from L-seryl-tRNA(Sec) (bacterial route): step 1/1. Functionally, converts seryl-tRNA(Sec) to selenocysteinyl-tRNA(Sec) required for selenoprotein biosynthesis. The sequence is that of L-seryl-tRNA(Sec) selenium transferase from Escherichia coli O6:H1 (strain CFT073 / ATCC 700928 / UPEC).